A 427-amino-acid chain; its full sequence is Glutamate-1-semialdehyde 2,1-aminomutase (427 aa).

The residue at position 267 (Lys-267) is an N6-(pyridoxal phosphate)lysine.

Belongs to the class-III pyridoxal-phosphate-dependent aminotransferase family. HemL subfamily. In terms of assembly, homodimer. The cofactor is pyridoxal 5'-phosphate.

Its subcellular location is the cytoplasm. The enzyme catalyses (S)-4-amino-5-oxopentanoate = 5-aminolevulinate. Its pathway is porphyrin-containing compound metabolism; protoporphyrin-IX biosynthesis; 5-aminolevulinate from L-glutamyl-tRNA(Glu): step 2/2. The sequence is that of Glutamate-1-semialdehyde 2,1-aminomutase from Syntrophotalea carbinolica (strain DSM 2380 / NBRC 103641 / GraBd1) (Pelobacter carbinolicus).